The chain runs to 90 residues: Small ribosomal subunit protein uS19 (90 aa).

This sequence belongs to the universal ribosomal protein uS19 family.

Functionally, protein S19 forms a complex with S13 that binds strongly to the 16S ribosomal RNA. This chain is Small ribosomal subunit protein uS19, found in Nitrosococcus oceani (strain ATCC 19707 / BCRC 17464 / JCM 30415 / NCIMB 11848 / C-107).